The chain runs to 414 residues: Gamma-glutamyl phosphate reductase (414 aa).

The protein belongs to the gamma-glutamyl phosphate reductase family.

The protein localises to the cytoplasm. The enzyme catalyses L-glutamate 5-semialdehyde + phosphate + NADP(+) = L-glutamyl 5-phosphate + NADPH + H(+). It functions in the pathway amino-acid biosynthesis; L-proline biosynthesis; L-glutamate 5-semialdehyde from L-glutamate: step 2/2. Functionally, catalyzes the NADPH-dependent reduction of L-glutamate 5-phosphate into L-glutamate 5-semialdehyde and phosphate. The product spontaneously undergoes cyclization to form 1-pyrroline-5-carboxylate. The chain is Gamma-glutamyl phosphate reductase from Geobacillus thermodenitrificans (strain NG80-2).